The chain runs to 344 residues: Lipase chaperone (344 aa).

A helical membrane pass occupies residues 14-34 (AVVYGVVGLAAIAGVAMWSGA). The disordered stretch occupies residues 39–78 (ATGASGESPEASVAGGSVTAPPQAAVPASTGLPPSLAGSS).

Belongs to the lipase chaperone family.

It localises to the cell inner membrane. Its function is as follows. May be involved in the folding of the extracellular lipase during its passage through the periplasm. The protein is Lipase chaperone (lifO) of Pseudomonas sp. (strain KWI-56).